The following is a 520-amino-acid chain: Glutamate--cysteine ligase (520 aa).

It belongs to the glutamate--cysteine ligase type 1 family. Type 1 subfamily.

It carries out the reaction L-cysteine + L-glutamate + ATP = gamma-L-glutamyl-L-cysteine + ADP + phosphate + H(+). The protein operates within sulfur metabolism; glutathione biosynthesis; glutathione from L-cysteine and L-glutamate: step 1/2. The protein is Glutamate--cysteine ligase of Leptospira interrogans serogroup Icterohaemorrhagiae serovar copenhageni (strain Fiocruz L1-130).